The following is a 197-amino-acid chain: Ribonuclease HII (197 aa).

One can recognise an RNase H type-2 domain in the interval 10 to 197 (ELIAGVDEVG…APVRKLLNTL (188 aa)). A divalent metal cation is bound by residues Asp-16, Glu-17, and Asp-108.

The protein belongs to the RNase HII family. Requires Mn(2+) as cofactor. Mg(2+) is required as a cofactor.

The protein localises to the cytoplasm. It carries out the reaction Endonucleolytic cleavage to 5'-phosphomonoester.. Functionally, endonuclease that specifically degrades the RNA of RNA-DNA hybrids. The chain is Ribonuclease HII (rnhB) from Pasteurella multocida (strain Pm70).